The sequence spans 512 residues: Chitin synthase regulatory factor 2 (512 aa).

Sel1-like repeat units lie at residues 224–260, 261–296, 297–333, 337–377, 378–414, and 415–452; these read SEALYLLAVCYGTGALRTEINEKEAYRLYKMAADLNH, VQAAYRVAICLQMGFGVTQNTEEAIHYFFRAASGQH, VGAMHRMALIYFRGLMSVKRDPVKAMYYLNLGALEAD, PQAL…KYGL, KDAQLRVARCFELGQLECDINLVRSFVWYRRLARKRN, and PEAMWKLSQFYLNGVDDVIYPNPELANEWAKAAAYKNH. Position 509 is a cysteine methyl ester (Cys509). The S-farnesyl cysteine moiety is linked to residue Cys509. Positions 510-512 are cleaved as a propeptide — removed in mature form; that stretch reads IIS.

It is found in the membrane. Involved in chitin biosynthesis. The polypeptide is Chitin synthase regulatory factor 2 (chr2) (Schizosaccharomyces pombe (strain 972 / ATCC 24843) (Fission yeast)).